The chain runs to 121 residues: Small ribosomal subunit protein bS16 (121 aa).

Over residues 97-114 the composition is skewed to basic and acidic residues; it reads LAKAKTKDGDNDSSKAES. The tract at residues 97–121 is disordered; sequence LAKAKTKDGDNDSSKAESESNEAET.

Belongs to the bacterial ribosomal protein bS16 family.

In Prochlorococcus marinus (strain MIT 9301), this protein is Small ribosomal subunit protein bS16.